A 430-amino-acid polypeptide reads, in one-letter code: Enolase (430 aa).

Gln164 provides a ligand contact to (2R)-2-phosphoglycerate. Glu208 acts as the Proton donor in catalysis. Residues Asp245, Glu288, and Asp315 each contribute to the Mg(2+) site. Positions 340, 369, 370, and 391 each coordinate (2R)-2-phosphoglycerate. Residue Lys340 is the Proton acceptor of the active site.

The protein belongs to the enolase family. Mg(2+) is required as a cofactor.

It localises to the cytoplasm. Its subcellular location is the secreted. It is found in the cell surface. The enzyme catalyses (2R)-2-phosphoglycerate = phosphoenolpyruvate + H2O. Its pathway is carbohydrate degradation; glycolysis; pyruvate from D-glyceraldehyde 3-phosphate: step 4/5. Functionally, catalyzes the reversible conversion of 2-phosphoglycerate (2-PG) into phosphoenolpyruvate (PEP). It is essential for the degradation of carbohydrates via glycolysis. This chain is Enolase, found in Thermococcus kodakarensis (strain ATCC BAA-918 / JCM 12380 / KOD1) (Pyrococcus kodakaraensis (strain KOD1)).